The chain runs to 877 residues: (E,E)-geranyllinalool synthase (877 aa).

Mg(2+) is bound by residues Asp-540 and Asp-544. Positions 540, 544, 677, and 680 each coordinate substrate. The short motif at 540 to 544 is the DDXXD motif element; it reads DDFFD. 3 residues coordinate Mg(2+): Asn-680, Ser-684, and Glu-688.

It belongs to the terpene synthase family. Tpsf subfamily. Mg(2+) is required as a cofactor. The cofactor is Mn(2+). As to expression, expressed in leaves and flowers.

It is found in the cytoplasm. The enzyme catalyses (2E,6E,10E)-geranylgeranyl diphosphate + H2O = (6E,10E)-geranyllinalool + diphosphate. The protein operates within secondary metabolite biosynthesis; terpenoid biosynthesis. Involved in the biosynthesis of homoterpenes, attractants of herbivores parasitoids and predators (e.g. predatory mites and parasitoid wasps). Involved in diterpene (C20) biosynthesis. Catalyzes the conversion of geranylgeranyl diphosphate to (E,E)-geranyllinalool, the precursor of the insect-induced volatile C16-homoterpene TMTT. The polypeptide is (E,E)-geranyllinalool synthase (Arabidopsis thaliana (Mouse-ear cress)).